A 379-amino-acid polypeptide reads, in one-letter code: Queuine tRNA-ribosyltransferase (379 aa).

Asp-94 functions as the Proton acceptor in the catalytic mechanism. Substrate is bound by residues 94–98 (DSGGF), Asp-148, Gln-191, and Gly-218. The tract at residues 249–255 (GVGSPDS) is RNA binding. Asp-268 serves as the catalytic Nucleophile. Residues 273 to 277 (TRIAR) are RNA binding; important for wobble base 34 recognition. Residues Cys-306, Cys-308, Cys-311, and His-337 each contribute to the Zn(2+) site.

This sequence belongs to the queuine tRNA-ribosyltransferase family. In terms of assembly, homodimer. Within each dimer, one monomer is responsible for RNA recognition and catalysis, while the other monomer binds to the replacement base PreQ1. It depends on Zn(2+) as a cofactor.

It carries out the reaction 7-aminomethyl-7-carbaguanine + guanosine(34) in tRNA = 7-aminomethyl-7-carbaguanosine(34) in tRNA + guanine. It functions in the pathway tRNA modification; tRNA-queuosine biosynthesis. Catalyzes the base-exchange of a guanine (G) residue with the queuine precursor 7-aminomethyl-7-deazaguanine (PreQ1) at position 34 (anticodon wobble position) in tRNAs with GU(N) anticodons (tRNA-Asp, -Asn, -His and -Tyr). Catalysis occurs through a double-displacement mechanism. The nucleophile active site attacks the C1' of nucleotide 34 to detach the guanine base from the RNA, forming a covalent enzyme-RNA intermediate. The proton acceptor active site deprotonates the incoming PreQ1, allowing a nucleophilic attack on the C1' of the ribose to form the product. After dissociation, two additional enzymatic reactions on the tRNA convert PreQ1 to queuine (Q), resulting in the hypermodified nucleoside queuosine (7-(((4,5-cis-dihydroxy-2-cyclopenten-1-yl)amino)methyl)-7-deazaguanosine). The polypeptide is Queuine tRNA-ribosyltransferase (Bacillus mycoides (strain KBAB4) (Bacillus weihenstephanensis)).